A 40-amino-acid polypeptide reads, in one-letter code: Trypsin inhibitor (40 aa).

In terms of assembly, monomer.

The enzyme catalyses Preferential cleavage: Arg-|-Xaa, Lys-|-Xaa.. In terms of biological role, inhibits trypsin but not chymotrypsin, papain or porcine pancreatic alpha-amylase. Has insecticidal activity against A.aegypti. Functions by inhibiting the A.aegypti midgut proteases to reduce the survival of larva and adults. This Cassia leiandra (Marimari) protein is Trypsin inhibitor.